Consider the following 147-residue polypeptide: DNA base-flipping protein (147 aa).

This sequence belongs to the MGMT family. ATL subfamily. Interacts with several proteins, including UvrA, UvrD and the three subunits of the RNA polymerase.

In terms of biological role, involved in DNA damage recognition. Binds DNA containing O(6)-methylguanine and larger O(6)-alkylguanine adducts. Binds to the damaged base and flips the base out of the DNA duplex into an extrahelical conformation, which allows processing by repair proteins. Also affects the regulation of gene expression in response to alkylation. The protein is DNA base-flipping protein of Thermus thermophilus (strain ATCC 27634 / DSM 579 / HB8).